Here is a 309-residue protein sequence, read N- to C-terminus: Probable inactive poly [ADP-ribose] polymerase SRO5 (309 aa).

Positions 28 to 255 constitute a PARP catalytic domain; it reads CDSSSDRSFA…AFPVLIKALS (228 aa). In terms of domain architecture, RST spans 238-309; that stretch reads KRLRSPWMAF…IKACGHKVQH (72 aa).

Interacts with dehydration-responsive DREB2 proteins and a number of transcription factors belonging to several protein families.

The protein localises to the nucleus matrix. Probable inactive ADP-ribosyltransferase that may be involved in stress and developmental responses. This chain is Probable inactive poly [ADP-ribose] polymerase SRO5 (SRO5), found in Arabidopsis thaliana (Mouse-ear cress).